The primary structure comprises 168 residues: Xanthine-guanine phosphoribosyltransferase (168 aa).

5-phospho-alpha-D-ribose 1-diphosphate-binding positions include 43–44 and 102–110; these read RG and DDLVDTGAT. A Mg(2+)-binding site is contributed by Asp103. Residues Asp106 and Ile149 each coordinate guanine. The xanthine site is built by Asp106 and Ile149. Residues 106–110 and 148–149 each bind GMP; these read DTGAT and WI.

The protein belongs to the purine/pyrimidine phosphoribosyltransferase family. XGPT subfamily. Homotetramer. It depends on Mg(2+) as a cofactor.

The protein resides in the cell inner membrane. The catalysed reaction is GMP + diphosphate = guanine + 5-phospho-alpha-D-ribose 1-diphosphate. It catalyses the reaction XMP + diphosphate = xanthine + 5-phospho-alpha-D-ribose 1-diphosphate. The enzyme catalyses IMP + diphosphate = hypoxanthine + 5-phospho-alpha-D-ribose 1-diphosphate. It functions in the pathway purine metabolism; GMP biosynthesis via salvage pathway; GMP from guanine: step 1/1. The protein operates within purine metabolism; XMP biosynthesis via salvage pathway; XMP from xanthine: step 1/1. Its function is as follows. Purine salvage pathway enzyme that catalyzes the transfer of the ribosyl-5-phosphate group from 5-phospho-alpha-D-ribose 1-diphosphate (PRPP) to the N9 position of the 6-oxopurines guanine and xanthine to form the corresponding ribonucleotides GMP (guanosine 5'-monophosphate) and XMP (xanthosine 5'-monophosphate), with the release of PPi. To a lesser extent, also acts on hypoxanthine. The polypeptide is Xanthine-guanine phosphoribosyltransferase (Nitrobacter hamburgensis (strain DSM 10229 / NCIMB 13809 / X14)).